The primary structure comprises 433 residues: UDP-N-acetylglucosamine 1-carboxyvinyltransferase 2 (433 aa).

Phosphoenolpyruvate is bound at residue 23-24 (KN). Arginine 96 is a binding site for UDP-N-acetyl-alpha-D-glucosamine. The Proton donor role is filled by cysteine 120. Cysteine 120 bears the 2-(S-cysteinyl)pyruvic acid O-phosphothioketal mark. UDP-N-acetyl-alpha-D-glucosamine is bound by residues 125–129 (RPIDL), aspartate 308, and valine 330.

Belongs to the EPSP synthase family. MurA subfamily.

Its subcellular location is the cytoplasm. The enzyme catalyses phosphoenolpyruvate + UDP-N-acetyl-alpha-D-glucosamine = UDP-N-acetyl-3-O-(1-carboxyvinyl)-alpha-D-glucosamine + phosphate. The protein operates within cell wall biogenesis; peptidoglycan biosynthesis. Its function is as follows. Cell wall formation. Adds enolpyruvyl to UDP-N-acetylglucosamine. The protein is UDP-N-acetylglucosamine 1-carboxyvinyltransferase 2 of Enterococcus faecalis (strain ATCC 700802 / V583).